The chain runs to 886 residues: DNA gyrase subunit A (886 aa).

Residues 35 to 501 (LPDVRDGLKP…GFEDLEDEDL (467 aa)) enclose the Topo IIA-type catalytic domain. Catalysis depends on Y123, which acts as the O-(5'-phospho-DNA)-tyrosine intermediate. Positions 528–534 (QNRGGRG) match the GyrA-box motif. The segment at 810–860 (VKEDADEENEDEQSTVSEDGTEQQREAVVNDETPGNAIHTEVIDSEVNDED) is disordered. Residues 813–822 (DADEENEDEQ) are compositionally biased toward acidic residues.

Belongs to the type II topoisomerase GyrA/ParC subunit family. Heterotetramer, composed of two GyrA and two GyrB chains. In the heterotetramer, GyrA contains the active site tyrosine that forms a transient covalent intermediate with DNA, while GyrB binds cofactors and catalyzes ATP hydrolysis.

The protein localises to the cytoplasm. It carries out the reaction ATP-dependent breakage, passage and rejoining of double-stranded DNA.. Functionally, a type II topoisomerase that negatively supercoils closed circular double-stranded (ds) DNA in an ATP-dependent manner to modulate DNA topology and maintain chromosomes in an underwound state. Negative supercoiling favors strand separation, and DNA replication, transcription, recombination and repair, all of which involve strand separation. Also able to catalyze the interconversion of other topological isomers of dsDNA rings, including catenanes and knotted rings. Type II topoisomerases break and join 2 DNA strands simultaneously in an ATP-dependent manner. The protein is DNA gyrase subunit A of Staphylococcus aureus (strain MRSA252).